The primary structure comprises 805 residues: Ubiquitin carboxyl-terminal hydrolase 5 (805 aa).

A Rhodanese domain is found at 159-283 (HGDALLLIDV…WVKLGGAYQS (125 aa)). A disordered region spans residues 359 to 380 (RNSPTVQKFSPHPPTTLSKLNT). In terms of domain architecture, USP spans 446-804 (VGLENIGNCC…SAYVLFYERI (359 aa)). Cys455 acts as the Nucleophile in catalysis. The active-site Proton acceptor is the His761.

The protein belongs to the peptidase C19 family.

The catalysed reaction is Thiol-dependent hydrolysis of ester, thioester, amide, peptide and isopeptide bonds formed by the C-terminal Gly of ubiquitin (a 76-residue protein attached to proteins as an intracellular targeting signal).. This Saccharomyces cerevisiae (strain ATCC 204508 / S288c) (Baker's yeast) protein is Ubiquitin carboxyl-terminal hydrolase 5 (UBP5).